A 94-amino-acid chain; its full sequence is Small ribosomal subunit protein bS20 (94 aa).

Belongs to the bacterial ribosomal protein bS20 family.

Functionally, binds directly to 16S ribosomal RNA. The chain is Small ribosomal subunit protein bS20 from Acaryochloris marina (strain MBIC 11017).